A 95-amino-acid chain; its full sequence is Beta-defensin 132 (95 aa).

The signal sequence occupies residues 1–22; the sequence is MKFLLLVLAALGFLTQVIPASG. 3 disulfides stabilise this stretch: Cys-27–Cys-55, Cys-35–Cys-49, and Cys-39–Cys-56. Residues 72–95 are disordered; sequence GNHWPSRSRNTQRKNKKQQTTVTP.

Belongs to the beta-defensin family.

It localises to the secreted. Functionally, has antibacterial activity. This chain is Beta-defensin 132 (DEFB132), found in Macaca fascicularis (Crab-eating macaque).